We begin with the raw amino-acid sequence, 936 residues long: Protocadherin gamma-A10 (936 aa).

An N-terminal signal peptide occupies residues 1–32 (MAAQRNRSKESKDCSGLVLLCLFFGIPWEAGA). Cadherin domains are found at residues 33–137 (RQIS…APKF), 138–246 (QAEN…APVF), 247–351 (TLPE…SPEL), 352–456 (TITS…PPTF), 457–566 (SQVS…APEI), and 574–687 (DGST…SPAN). Residues 33–696 (RQISYSIPEE…NSETSDLTLY (664 aa)) lie on the Extracellular side of the membrane. An N-linked (GlcNAc...) asparagine glycan is attached at N51. 2 N-linked (GlcNAc...) asparagine glycosylation sites follow: N423 and N549. Residues 697 to 717 (LVVAVAAVSCVFLAFVIVLLA) form a helical membrane-spanning segment. At 718–936 (HRLRRWHKSR…KKKSGKKEKK (219 aa)) the chain is on the cytoplasmic side. Disordered regions lie at residues 806 to 845 (EDTP…WPNN) and 906 to 936 (ATLT…KEKK). The span at 820 to 845 (WRFSQAQRPGTSGSQNGDDTGTWPNN) shows a compositional bias: polar residues. The span at 926–936 (NKKKSGKKEKK) shows a compositional bias: basic residues.

The protein localises to the cell membrane. Functionally, potential calcium-dependent cell-adhesion protein. May be involved in the establishment and maintenance of specific neuronal connections in the brain. This chain is Protocadherin gamma-A10 (PCDHGA10), found in Homo sapiens (Human).